Consider the following 490-residue polypeptide: Aspartyl/glutamyl-tRNA(Asn/Gln) amidotransferase subunit B (490 aa).

Belongs to the GatB/GatE family. GatB subfamily. As to quaternary structure, heterotrimer of A, B and C subunits.

The enzyme catalyses L-glutamyl-tRNA(Gln) + L-glutamine + ATP + H2O = L-glutaminyl-tRNA(Gln) + L-glutamate + ADP + phosphate + H(+). It carries out the reaction L-aspartyl-tRNA(Asn) + L-glutamine + ATP + H2O = L-asparaginyl-tRNA(Asn) + L-glutamate + ADP + phosphate + 2 H(+). Allows the formation of correctly charged Asn-tRNA(Asn) or Gln-tRNA(Gln) through the transamidation of misacylated Asp-tRNA(Asn) or Glu-tRNA(Gln) in organisms which lack either or both of asparaginyl-tRNA or glutaminyl-tRNA synthetases. The reaction takes place in the presence of glutamine and ATP through an activated phospho-Asp-tRNA(Asn) or phospho-Glu-tRNA(Gln). This Zymomonas mobilis subsp. mobilis (strain ATCC 31821 / ZM4 / CP4) protein is Aspartyl/glutamyl-tRNA(Asn/Gln) amidotransferase subunit B.